Consider the following 573-residue polypeptide: Probable cytochrome c oxidase subunit 1 (573 aa).

Residues 40–60 form a helical membrane-spanning segment; the sequence is IGIMYCVACISFFFIGGLLAL. Histidine 86 provides a ligand contact to Fe(II)-heme a. A run of 6 helical transmembrane segments spans residues 89-109, 121-141, 170-190, 213-233, 258-278, and 290-310; these read IMLL…VLPL, LNAF…AGFI, LWIM…VNMI, IMVT…ALFG, LFWF…FGIV, and IFGY…SVAV. Residues histidine 264 and tyrosine 268 each contribute to the Cu cation site. A cross-link (1'-histidyl-3'-tyrosine (His-Tyr)) is located at residues 264 to 268; sequence HPEVY. Cu cation-binding residues include histidine 313 and histidine 314. The next 2 membrane-spanning stretches (helical) occupy residues 315 to 335 and 359 to 379; these read MFAT…LIAV and MLFS…GVLL. Histidine 397 is a binding site for heme a3. 3 helical membrane passes run 398 to 418, 433 to 453, and 476 to 496; these read FHYV…YFWF, LHFW…HWLG, and VSTI…WNVF. Histidine 399 serves as a coordination point for Fe(II)-heme a.

It belongs to the heme-copper respiratory oxidase family.

It is found in the cell membrane. The catalysed reaction is 4 Fe(II)-[cytochrome c] + O2 + 8 H(+)(in) = 4 Fe(III)-[cytochrome c] + 2 H2O + 4 H(+)(out). Its pathway is energy metabolism; oxidative phosphorylation. Its function is as follows. Cytochrome c oxidase is the component of the respiratory chain that catalyzes the reduction of oxygen to water. Subunits 1-3 form the functional core of the enzyme complex. CO I is the catalytic subunit of the enzyme. Electrons originating in cytochrome c are transferred via the copper A center of subunit 2 and heme A of subunit 1 to the bimetallic center formed by heme A3 and copper B. In Mycobacterium bovis (strain ATCC BAA-935 / AF2122/97), this protein is Probable cytochrome c oxidase subunit 1 (ctaD).